The following is a 639-amino-acid chain: Extracellular metalloproteinase 9 (639 aa).

An N-terminal signal peptide occupies residues 1 to 19 (MHGLLLAAGLLSLPLRALG). Positions 20 to 250 (HPNPNPQMHT…IHGVVDYVAD (231 aa)) are excised as a propeptide. A glycan (N-linked (GlcNAc...) asparagine) is linked at N278. Residues 293-312 (PTTRGNNGIAQDNPSGGNQY) are disordered. Zn(2+) is bound at residue H434. Residue E435 is part of the active site. H438 is a binding site for Zn(2+).

Belongs to the peptidase M36 family. Zn(2+) serves as cofactor.

It is found in the secreted. In terms of biological role, secreted metalloproteinase that allows assimilation of proteinaceous substrates and probably acts as a virulence factor. In Coccidioides posadasii (strain C735) (Valley fever fungus), this protein is Extracellular metalloproteinase 9 (MEP9).